The chain runs to 474 residues: Nitric oxide reductase subunit B (474 aa).

Residues 19 to 39 (YFVFALILFVGQVLFGLIMGL) form a helical membrane-spanning segment. His-60 provides a ligand contact to heme b. A run of 8 helical transmembrane segments spans residues 61 to 81 (TNLL…YLIP), 95 to 115 (IILF…YLFV), 145 to 165 (IGIV…MLKG), 169 to 189 (VVST…LFAF), 207 to 227 (HLWV…FVLI), 243 to 263 (VIIA…FFWI), 270 to 290 (LWVG…MVLF), and 308 to 328 (SLWA…WGFM). The Fe cation site is built by His-207, His-258, and His-259. Positions 347 and 349 each coordinate heme b. 3 helical membrane passes run 348 to 368 (GHLA…SYAM), 390 to 410 (FWLM…AGVV), and 433 to 453 (LAIF…GLVC).

Belongs to the heme-copper respiratory oxidase family. In terms of assembly, heterodimer of cytochromes b (large subunit) and c (small subunit).

The protein localises to the cell membrane. The enzyme catalyses nitrous oxide + 2 Fe(III)-[cytochrome c] + H2O = 2 nitric oxide + 2 Fe(II)-[cytochrome c] + 2 H(+). Its pathway is nitrogen metabolism; nitrate reduction (denitrification); dinitrogen from nitrate: step 3/4. In terms of biological role, component of the anaerobic respiratory chain that transforms nitrate to dinitrogen (denitrification). NorB is the catalytic subunit of the enzyme complex. Shows proton pump activity across the membrane in denitrifying bacterial cells. The mononitrogen reduction is probably coupled to electron transport phosphorylation. The sequence is that of Nitric oxide reductase subunit B (norB) from Stutzerimonas stutzeri (Pseudomonas stutzeri).